Here is a 161-residue protein sequence, read N- to C-terminus: Cyclic pyranopterin monophosphate synthase (161 aa).

Substrate contacts are provided by residues 75–77 and 114–115; these read MCH and ME. Asp-129 is a catalytic residue.

It belongs to the MoaC family. As to quaternary structure, homohexamer; trimer of dimers.

It carries out the reaction (8S)-3',8-cyclo-7,8-dihydroguanosine 5'-triphosphate = cyclic pyranopterin phosphate + diphosphate. The protein operates within cofactor biosynthesis; molybdopterin biosynthesis. Catalyzes the conversion of (8S)-3',8-cyclo-7,8-dihydroguanosine 5'-triphosphate to cyclic pyranopterin monophosphate (cPMP). The polypeptide is Cyclic pyranopterin monophosphate synthase (Staphylococcus carnosus (strain TM300)).